Reading from the N-terminus, the 196-residue chain is uncharacterized protein (196 aa).

A helical transmembrane segment spans residues 20–40 (GALALGCIALLLMGIVGCTTV).

It is found in the membrane. This is an uncharacterized protein from Mycobacterium tuberculosis (strain CDC 1551 / Oshkosh).